The following is a 224-amino-acid chain: MAKSGKKYMQAISKIDKLKSYSIDDAISLLKEIKFVKFDETIDVSINLNLKKNHTVRDTVVLPNQFMKEKRILVFAKGDRAQEAKEAGAAYVGDDDLINKVKGGFSDFDIVVATPDMMKDVGKLGPILGKRGLMPNPKTQTITNDLKGTIAGLKKGRTEFRANKNGVLNFSVGKSSMDNKKIKENYDEFIKELLKRRPSDLKGTFVDSVYISSTMGPSVKIDFV.

It belongs to the universal ribosomal protein uL1 family. As to quaternary structure, part of the 50S ribosomal subunit.

Its function is as follows. Binds directly to 23S rRNA. The L1 stalk is quite mobile in the ribosome, and is involved in E site tRNA release. Functionally, protein L1 is also a translational repressor protein, it controls the translation of the L11 operon by binding to its mRNA. The chain is Large ribosomal subunit protein uL1 from Borrelia hermsii (strain HS1 / DAH).